The following is a 259-amino-acid chain: Transcription factor bHLH125 (259 aa).

One can recognise a bHLH domain in the interval 73 to 125 (SKKMKHRDIERQRRQEVSSLFKRLRTLLPFQYIQGKRSTSDHIVQAVNYIKDL).

Homodimer.

Its subcellular location is the nucleus. This Arabidopsis thaliana (Mouse-ear cress) protein is Transcription factor bHLH125 (BHLH125).